Consider the following 154-residue polypeptide: MAGPVKDREAFQRLNFLYQAAHCVLAQDPENQALARFYCYTERTIAKRLVLRRDPSVKRTLCRGCSSLLVPGLTCTQRQRRCRGQRWTVQTCLTCQRSQRFLNDPGHLLWGDRPEAQLGSQADSKPLQPLPNTAHSISDRLPEEKMQTQGSSNQ.

Position 2 is an N-acetylalanine (alanine 2). Residues cysteine 62, cysteine 65, cysteine 92, and cysteine 95 each coordinate Zn(2+). Positions 117–154 are disordered; that stretch reads QLGSQADSKPLQPLPNTAHSISDRLPEEKMQTQGSSNQ. Positions 137–146 are enriched in basic and acidic residues; that stretch reads ISDRLPEEKM.

It belongs to the eukaryotic/archaeal RNase P protein component 4 family. As to quaternary structure, RNase P consists of a catalytic RNA moiety and about 10 protein subunits; POP1, POP4, POP5, POP7, RPP14, RPP21, RPP25, RPP30, RPP38 and RPP40. Within the RNase P complex, POP1, POP7 and RPP25 form the 'finger' subcomplex, POP5, RPP14, RPP40 and homodimeric RPP30 form the 'palm' subcomplex, and RPP21, POP4 and RPP38 form the 'wrist' subcomplex. All subunits of the RNase P complex interact with the catalytic RNA.

It localises to the nucleus. The protein resides in the nucleolus. Component of ribonuclease P, a ribonucleoprotein complex that generates mature tRNA molecules by cleaving their 5'-ends. In Homo sapiens (Human), this protein is Ribonuclease P protein subunit p21 (RPP21).